Here is a 150-residue protein sequence, read N- to C-terminus: Ribonuclease pancreatic (150 aa).

Residues 1 to 26 (MALKSLVLLSLLVLVLLLVRVQPSLG) form the signal peptide. N-linked (Glc) (glycation) lysine; in vitro glycans are attached at residues Lys27 and Lys33. 2 residues coordinate substrate: Lys33 and Arg36. His38 serves as the catalytic Proton acceptor. 4 cysteine pairs are disulfide-bonded: Cys52/Cys110, Cys66/Cys121, Cys84/Cys136, and Cys91/Cys98. The N-linked (GlcNAc...) asparagine; partial glycan is linked to Asn60. 2 N-linked (Glc) (glycation) lysine; in vitro glycosylation sites follow: Lys63 and Lys67. Substrate contacts are provided by residues 67–71 (KPVNT), Lys92, and Arg111. His145 acts as the Proton donor in catalysis.

It belongs to the pancreatic ribonuclease family. In terms of assembly, interacts with and forms tight 1:1 complexes with RNH1. Dimerization of two such complexes may occur. Interaction with RNH1 inhibits this protein. Monomer. In terms of tissue distribution, pancreas.

The protein localises to the secreted. It carries out the reaction an [RNA] containing cytidine + H2O = an [RNA]-3'-cytidine-3'-phosphate + a 5'-hydroxy-ribonucleotide-3'-[RNA].. The catalysed reaction is an [RNA] containing uridine + H2O = an [RNA]-3'-uridine-3'-phosphate + a 5'-hydroxy-ribonucleotide-3'-[RNA].. Endonuclease that catalyzes the cleavage of RNA on the 3' side of pyrimidine nucleotides. Acts on single-stranded and double-stranded RNA. This chain is Ribonuclease pancreatic (RNASE1), found in Bos taurus (Bovine).